A 218-amino-acid chain; its full sequence is Adenylate kinase (218 aa).

10–15 contributes to the ATP binding site; sequence GAGKGT. Residues 30 to 59 are NMP; the sequence is STGDMLRAAVKAQSELGMAAKKVMDEGGLV. AMP is bound by residues Thr31, Arg36, 57–59, 85–88, and Gln92; these read GLV and GFPR. Positions 122–159 are LID; it reads GRRVHPASGRTYHIVFNPPAVEGKDDVTGEDLVQRDDD. Residues Arg123 and 132–133 each bind ATP; that span reads TY. Arg156 and Arg167 together coordinate AMP. An ATP-binding site is contributed by Gly203.

It belongs to the adenylate kinase family. Monomer.

It is found in the cytoplasm. It carries out the reaction AMP + ATP = 2 ADP. It functions in the pathway purine metabolism; AMP biosynthesis via salvage pathway; AMP from ADP: step 1/1. Functionally, catalyzes the reversible transfer of the terminal phosphate group between ATP and AMP. Plays an important role in cellular energy homeostasis and in adenine nucleotide metabolism. The protein is Adenylate kinase of Chlorobaculum parvum (strain DSM 263 / NCIMB 8327) (Chlorobium vibrioforme subsp. thiosulfatophilum).